A 218-amino-acid polypeptide reads, in one-letter code: Thiopurine S-methyltransferase (218 aa).

The S-adenosyl-L-methionine site is built by Trp-10, Leu-45, Glu-66, and Arg-123.

It belongs to the class I-like SAM-binding methyltransferase superfamily. TPMT family.

It is found in the cytoplasm. The enzyme catalyses S-adenosyl-L-methionine + a thiopurine = S-adenosyl-L-homocysteine + a thiopurine S-methylether.. This is Thiopurine S-methyltransferase from Shewanella sp. (strain W3-18-1).